We begin with the raw amino-acid sequence, 118 residues long: Small ribosomal subunit protein uS13 (118 aa).

A disordered region spans residues 93 to 118 (RNLPVRGQNTKNNARTRKGPTRPLKR). Over residues 106-118 (ARTRKGPTRPLKR) the composition is skewed to basic residues.

This sequence belongs to the universal ribosomal protein uS13 family. As to quaternary structure, part of the 30S ribosomal subunit. Forms a loose heterodimer with protein S19. Forms two bridges to the 50S subunit in the 70S ribosome.

In terms of biological role, located at the top of the head of the 30S subunit, it contacts several helices of the 16S rRNA. In the 70S ribosome it contacts the 23S rRNA (bridge B1a) and protein L5 of the 50S subunit (bridge B1b), connecting the 2 subunits; these bridges are implicated in subunit movement. Contacts the tRNAs in the A and P-sites. In Psychrobacter cryohalolentis (strain ATCC BAA-1226 / DSM 17306 / VKM B-2378 / K5), this protein is Small ribosomal subunit protein uS13.